Here is a 604-residue protein sequence, read N- to C-terminus: Pescadillo homolog (604 aa).

Positions 275 to 299 (NSEPAGLIEDKEGEDNKESSKTDES) are disordered. Positions 282 to 299 (IEDKEGEDNKESSKTDES) are enriched in basic and acidic residues. The BRCT domain maps to 337–427 (ECRSLFKNLK…IILPTEGYIV (91 aa)). Disordered stretches follow at residues 518–557 (KTFSNRTADNQPDVVDKSDTKEADDHMEDSHKQAEKDAAD) and 574–604 (IEINQERKKDKVNLLKKRKKNADSSASAKGR). Basic and acidic residues-rich tracts occupy residues 531 to 557 (VVDKSDTKEADDHMEDSHKQAEKDAAD) and 577 to 586 (NQERKKDKVN).

It belongs to the pescadillo family.

The protein localises to the nucleus. The protein resides in the nucleolus. It localises to the nucleoplasm. Functionally, required for maturation of ribosomal RNAs and formation of the large ribosomal subunit. This chain is Pescadillo homolog (PES), found in Oryza sativa subsp. japonica (Rice).